Reading from the N-terminus, the 160-residue chain is Serine-protein kinase RsbW (160 aa).

This sequence belongs to the anti-sigma-factor family.

The enzyme catalyses L-seryl-[protein] + ATP = O-phospho-L-seryl-[protein] + ADP + H(+). The catalysed reaction is L-threonyl-[protein] + ATP = O-phospho-L-threonyl-[protein] + ADP + H(+). In terms of biological role, negative regulator of sigma-B activity. Phosphorylates and inactivates its specific antagonist protein, RsbV. Upon phosphorylation of RsbV, RsbW is released and binds to sigma-B, thereby blocking its ability to form an RNA polymerase holoenzyme (E-sigma-B). The sequence is that of Serine-protein kinase RsbW from Bacillus cereus (strain Q1).